The primary structure comprises 518 residues: Apolipoprotein N-acyltransferase (518 aa).

A run of 6 helical transmembrane segments spans residues 22-42 (LAFI…LWII), 63-83 (FFHW…WVHV), 101-121 (ALLA…LAWF), 134-154 (LLFP…LTGF), 174-194 (IIGA…LALC), and 202-222 (LLIL…LSQI). The 251-residue stretch at 234–484 (VQGNIPQSMK…TGVLSATIPL (251 aa)) folds into the CN hydrolase domain. Glu-273 serves as the catalytic Proton acceptor. Lys-343 is a catalytic residue. The Nucleophile role is filled by Cys-395. The chain crosses the membrane as a helical span at residues 492 to 512 (AKIGQTPLLILCGALLLVGFI).

It belongs to the CN hydrolase family. Apolipoprotein N-acyltransferase subfamily.

The protein localises to the cell inner membrane. It catalyses the reaction N-terminal S-1,2-diacyl-sn-glyceryl-L-cysteinyl-[lipoprotein] + a glycerophospholipid = N-acyl-S-1,2-diacyl-sn-glyceryl-L-cysteinyl-[lipoprotein] + a 2-acyl-sn-glycero-3-phospholipid + H(+). The protein operates within protein modification; lipoprotein biosynthesis (N-acyl transfer). Catalyzes the phospholipid dependent N-acylation of the N-terminal cysteine of apolipoprotein, the last step in lipoprotein maturation. This is Apolipoprotein N-acyltransferase from Shewanella oneidensis (strain ATCC 700550 / JCM 31522 / CIP 106686 / LMG 19005 / NCIMB 14063 / MR-1).